Reading from the N-terminus, the 170-residue chain is Photosystem II extrinsic protein V (170 aa).

The signal sequence occupies residues 1-33 (MVSVFSSLRQSFKGLLVLVPVLIGLAFISPAEA). Residues C70, C73, H74, and M137 each coordinate heme c.

This sequence belongs to the cytochrome c family. PsbV subfamily. PSII is composed of 1 copy each of membrane proteins PsbA, PsbB, PsbC, PsbD, PsbE, PsbF, PsbH, PsbI, PsbJ, PsbK, PsbL, PsbM, PsbT, PsbX, PsbY, PsbZ, Psb30/Ycf12, peripheral proteins PsbO, CyanoQ (PsbQ), PsbU, PsbV and a large number of cofactors. It forms dimeric complexes. Heme c is required as a cofactor.

The protein resides in the cellular thylakoid membrane. Its function is as follows. One of the extrinsic, lumenal subunits of photosystem II (PSII). PSII is a light-driven water plastoquinone oxidoreductase, using light energy to abstract electrons from H(2)O, generating a proton gradient subsequently used for ATP formation. The extrinsic proteins stabilize the structure of photosystem II oxygen-evolving complex (OEC), the ion environment of oxygen evolution and protect the OEC against heat-induced inactivation. Low-potential cytochrome c that plays a role in the OEC of PSII. This chain is Photosystem II extrinsic protein V, found in Synechococcus sp. (strain CC9902).